A 294-amino-acid polypeptide reads, in one-letter code: MSASAESTNATPYGTLPPTAAASARKPISLPRLLEMHARGEKLTMLTAYDATFAAVADAAGVECILVGDSLGMVCQGLSSTMGVTLQAMCYHIESVARGLRRAQATAWLIGDLPYGSYHESREQALRSAAALMQAGSHMVKLEGGGWTADTVRFLVERGIPVCAHLGLTPQTVHALGGYRVQGKTQESAALMKRQAHELQDAGAALLVLEMVPAALAAELTRELTHCATIGIGAGKDTAGQVLVLHDMLGINLGKMPKFVRNFMTGAPGVKEAMQAYVAAVKNGSFPDNTQHAW.

Positions 1–12 (MSASAESTNATP) are enriched in polar residues. Residues 1–21 (MSASAESTNATPYGTLPPTAA) form a disordered region. Residues aspartate 69 and aspartate 112 each contribute to the Mg(2+) site. Residues 69–70 (DS), aspartate 112, and lysine 141 each bind 3-methyl-2-oxobutanoate. Position 143 (glutamate 143) interacts with Mg(2+). Glutamate 210 acts as the Proton acceptor in catalysis.

Belongs to the PanB family. Homodecamer; pentamer of dimers. Mg(2+) is required as a cofactor.

The protein resides in the cytoplasm. It carries out the reaction 3-methyl-2-oxobutanoate + (6R)-5,10-methylene-5,6,7,8-tetrahydrofolate + H2O = 2-dehydropantoate + (6S)-5,6,7,8-tetrahydrofolate. The protein operates within cofactor biosynthesis; (R)-pantothenate biosynthesis; (R)-pantoate from 3-methyl-2-oxobutanoate: step 1/2. Its function is as follows. Catalyzes the reversible reaction in which hydroxymethyl group from 5,10-methylenetetrahydrofolate is transferred onto alpha-ketoisovalerate to form ketopantoate. This is 3-methyl-2-oxobutanoate hydroxymethyltransferase from Albidiferax ferrireducens (strain ATCC BAA-621 / DSM 15236 / T118) (Rhodoferax ferrireducens).